The following is a 685-amino-acid chain: Amino acid transporter heavy chain SLC3A1 (685 aa).

The span at methionine 1–proline 10 shows a compositional bias: basic and acidic residues. The interval methionine 1 to proline 53 is disordered. Over methionine 1–leucine 88 the chain is Cytoplasmic. A helical; Signal-anchor for type II membrane protein transmembrane segment spans residues phenylalanine 89 to isoleucine 109. Topologically, residues serine 110–cysteine 685 are extracellular. Residue asparagine 213 coordinates Ca(2+). 3 N-linked (GlcNAc...) asparagine glycosylation sites follow: asparagine 213, asparagine 240, and asparagine 260. Residues cysteine 241 and cysteine 272 are joined by a disulfide bond. Ca(2+) contacts are provided by aspartate 283, phenylalanine 317, leucine 318, and glutamate 320. N-linked (GlcNAc...) asparagine glycosylation occurs at asparagine 331. A Phosphoserine modification is found at serine 385. Residues asparagine 512 and asparagine 522 are each glycosylated (N-linked (GlcNAc...) asparagine). 2 disulfide bridges follow: cysteine 570-cysteine 666 and cysteine 673-cysteine 685.

Disulfide-linked heterodimer composed of the catalytic light subunit SLC7A9 and the heavy subunit SLC3A1. The heterodimer is the minimal functional unit. Assembles in non-covalently linked heterotetramers (dimers of heterodimers) and higher order oligomers; the oligomerization is mediated by SLC3A1 likely to prevent degradation in the endoplasmic reticulum and facilitate heteromer trafficking to the plasma membrane. Disulfide-linked heterodimer composed of the catalytic light subunit SLC7A13 and the heavy subunit SLC3A1. As to expression, expressed in the brush border membrane in the kidney (at protein level). Highly expressed in renal tubules in the outer stripe of the outer medulla and medullary ray (at protein level). Also detected in the renal cortex. More abundant in male than female kidneys.

It is found in the cell membrane. The protein resides in the apical cell membrane. In terms of biological role, acts as a chaperone that facilitates biogenesis and trafficking of functional transporter heteromers to the plasma membrane. Associates with SLC7A9 to form a functional transporter complex that mediates the electrogenic exchange between cationic amino acids and neutral amino acids, with a stoichiometry of 1:1. SLC7A9-SLC3A1 transporter has system b(0,+)-like activity with high affinity for extracellular cationic amino acids and L-cystine and lower affinity for intracellular neutral amino acids. Substrate exchange is driven by high concentration of intracellular neutral amino acids and the intracellular reduction of L-cystine to L-cysteine. SLC7A9-SLC3A1 acts as a major transporter for reabsorption of L-cystine and dibasic amino acids across the brush border membrane in early proximal tubules. Associates with SLC7A13 to form a functional complex that transports anionic and neutral amino acids via exchange or facilitated diffusion. SLC7A13-SLC3A1 may act as a major transporter for L-cystine in late proximal tubules, ensuring its reabsorption from the luminal fluid in exchange for cytosolic L-glutamate or L-aspartate. The polypeptide is Amino acid transporter heavy chain SLC3A1 (Mus musculus (Mouse)).